We begin with the raw amino-acid sequence, 219 residues long: Guanylate kinase (219 aa).

One can recognise a Guanylate kinase-like domain in the interval 15–194 (GLMFVLSSPS…AFAEVQSILK (180 aa)). 22-29 (SPSGAGKT) provides a ligand contact to ATP.

Belongs to the guanylate kinase family.

It localises to the cytoplasm. It catalyses the reaction GMP + ATP = GDP + ADP. Its function is as follows. Essential for recycling GMP and indirectly, cGMP. In Nitrobacter hamburgensis (strain DSM 10229 / NCIMB 13809 / X14), this protein is Guanylate kinase.